A 423-amino-acid chain; its full sequence is MESLKRWNEERGLWCEKGVQVLLTTIGAFSAFGLMTIAISTDYWLYTRALICNTTNLTAGDDGPPHRGGSGSSEKKDPGGLTHSGLWRICCLEGLKRGVCVKINHFPEDTDYDHDSAEYLLRVVRASSIFPILSAILLLLGGVCVAASRVYKSKRNIILGAGILFVAAGLSNIIGVIVYISANAGEPGPKRDEEKKNHYSYGWSFYFGGLSFILAEVIGVLAVNIYIERSREAHCQSRSDLLKAGGGAGGSGGSGPSAILRLPSYRFRYRRRSRSSSRGSSEASPSRDASPGGPGGPGFASTDISMYTLSRDPSKGSVAAGLASAGGGGSGAGVGAYGGAAGAAGGGGAGSERDRGSSAGFLTLHNAFPKEAASGVTVTVTGPPAAPAPAPAPPAPAAPAPGTLSKEAAASNTNTLNRKTTPV.

Transmembrane regions (helical) follow at residues 19 to 39, 127 to 147, 157 to 177, and 207 to 227; these read VQVLLTTIGAFSAFGLMTIAI, SSIFPILSAILLLLGGVCVAA, IILGAGILFVAAGLSNIIGVI, and FGGLSFILAEVIGVLAVNIYI. Phosphoserine occurs at positions 251 and 254. Positions 271–304 are disordered; that stretch reads RRSRSSSRGSSEASPSRDASPGGPGGPGFASTDI. Positions 276–287 are enriched in low complexity; sequence SSRGSSEASPSR. Residues 318-338 form a helical membrane-spanning segment; the sequence is VAAGLASAGGGGSGAGVGAYG. 2 disordered regions span residues 342–363 and 378–423; these read GAAGGGGAGSERDRGSSAGFLT and VTVT…TTPV. A compositionally biased stretch (pro residues) spans 384-399; that stretch reads PAAPAPAPAPPAPAAP. A compositionally biased stretch (polar residues) spans 410 to 423; sequence ASNTNTLNRKTTPV.

Belongs to the PMP-22/EMP/MP20 family. CACNG subfamily. In terms of assembly, interacts with CACNA1C. Identified in a complex with the L-type calcium channel subunits CACNA1C, CACNA2D1 and either CACNB1 or CACNB2. Acts as an auxiliary subunit for AMPA-selective glutamate receptors (AMPARs). Found in a complex with GRIA1, GRIA2, GRIA3, GRIA4, CNIH2, CNIH3, CACNG2, CACNG3, CACNG4, CACNG5 and CACNG7. Interacts with CNIH2. Found in a complex with GRIA1, GRIA2, GRIA3, GRIA4, DLG4 and CNIH2. Post-translationally, palmitoylated. Probably palmitoylated by ZDHHC3 and ZDHHC7.

It is found in the cell membrane. It localises to the postsynaptic density membrane. Functionally, regulates the activity of L-type calcium channels that contain CACNA1C as pore-forming subunit. Regulates the trafficking and gating properties of AMPA-selective glutamate receptors (AMPARs). Promotes their targeting to the cell membrane and synapses and modulates their gating properties by slowing their rates of activation, deactivation and desensitization and by mediating their resensitization. Does not show subunit-specific AMPA receptor regulation and regulates all AMPAR subunits. Thought to stabilize the calcium channel in an inactivated (closed) state. This Mus musculus (Mouse) protein is Voltage-dependent calcium channel gamma-8 subunit.